A 700-amino-acid chain; its full sequence is Elongation factor G 2 (700 aa).

Positions 8–290 (ERYRNIGISA…AVVDYLPSPI (283 aa)) constitute a tr-type G domain. Residues 17–24 (AHIDAGKT), 88–92 (DTPGH), and 142–145 (NKMD) contribute to the GTP site.

The protein belongs to the TRAFAC class translation factor GTPase superfamily. Classic translation factor GTPase family. EF-G/EF-2 subfamily.

It is found in the cytoplasm. In terms of biological role, catalyzes the GTP-dependent ribosomal translocation step during translation elongation. During this step, the ribosome changes from the pre-translocational (PRE) to the post-translocational (POST) state as the newly formed A-site-bound peptidyl-tRNA and P-site-bound deacylated tRNA move to the P and E sites, respectively. Catalyzes the coordinated movement of the two tRNA molecules, the mRNA and conformational changes in the ribosome. The protein is Elongation factor G 2 (fusB) of Ralstonia nicotianae (strain ATCC BAA-1114 / GMI1000) (Ralstonia solanacearum).